The chain runs to 313 residues: Ribosomal RNA small subunit methyltransferase H (313 aa).

S-adenosyl-L-methionine contacts are provided by residues 37–39 (GGH), Asp57, Phe83, Asp104, and Gln111.

This sequence belongs to the methyltransferase superfamily. RsmH family.

It localises to the cytoplasm. The enzyme catalyses cytidine(1402) in 16S rRNA + S-adenosyl-L-methionine = N(4)-methylcytidine(1402) in 16S rRNA + S-adenosyl-L-homocysteine + H(+). Functionally, specifically methylates the N4 position of cytidine in position 1402 (C1402) of 16S rRNA. The polypeptide is Ribosomal RNA small subunit methyltransferase H (Mycoplasmoides gallisepticum (strain R(low / passage 15 / clone 2)) (Mycoplasma gallisepticum)).